A 37-amino-acid polypeptide reads, in one-letter code: Large ribosomal subunit protein bL36 (37 aa).

This sequence belongs to the bacterial ribosomal protein bL36 family.

The chain is Large ribosomal subunit protein bL36 from Sulfurovum sp. (strain NBC37-1).